Consider the following 359-residue polypeptide: N6-succino-2-amino-2'-deoxyadenylate synthase (359 aa).

Ser23 acts as the Proton acceptor in catalysis. Residues Ser23, Thr24, Gly25, Lys26, and Gly27 each coordinate ATP. Ser23 lines the dGMP pocket. Ser23 provides a ligand contact to Mg(2+). DGMP is bound at residue Asn49. Residues Gly51, His52, and Thr53 each coordinate ATP. Gly51 serves as a coordination point for Mg(2+). Residues Ser131, Thr132, and Arg146 each coordinate dGMP. ATP is bound at residue Gln190. Residue Thr205 participates in dGMP binding. Residue Thr274 coordinates Mg(2+). Positions 274, 275, and 280 each coordinate L-aspartate. ATP contacts are provided by Asn305 and Gln308.

The protein belongs to the Caudovirales PurZ family. Requires Mg(2+) as cofactor.

The enzyme catalyses dGMP + L-aspartate + ATP = (2S)-2-amino-2'-deoxyadenylo-succinate + ADP + phosphate + 2 H(+). It functions in the pathway purine metabolism. Functionally, involved in the synthesis of the atypical nucleotide dZTP (2-amino-2'-deoxyadenosine-5'-triphosphate). Catalyzes the condensation of aspartate with deoxyguanylate into dSMP (N6-succino-2-amino-2'-deoxyadenylate), which undergoes defumarylation and phosphorylation respectively by host PurB and guanylate/nucleoside diphosphate kinases to give dZTP. dZTP is integrated into the viral genome instead of adenine by the viral DNA polymerase. This Z-base probably completely replaces adenosine and forms a triple bond to the opposite T-base. The resulting non-standard viral DNA is called Z-genome. The chemically modified DNA is probably harder for the host bacteria to digest with nucleases or restriction enzymes. The chain is N6-succino-2-amino-2'-deoxyadenylate synthase from Cyanophage S-2L (Cyanobacteria phage S-2L).